The chain runs to 473 residues: Glutamate--tRNA ligase (473 aa).

Residues 10 to 20 (PSPTGYLHLGN) carry the 'HIGH' region motif. Zn(2+)-binding residues include Cys98, Cys100, Cys125, and His127. Positions 242–246 (KLSKR) match the 'KMSKS' region motif. Residue Lys245 participates in ATP binding.

This sequence belongs to the class-I aminoacyl-tRNA synthetase family. Glutamate--tRNA ligase type 1 subfamily. Monomer. Zn(2+) serves as cofactor.

The protein resides in the cytoplasm. The catalysed reaction is tRNA(Glu) + L-glutamate + ATP = L-glutamyl-tRNA(Glu) + AMP + diphosphate. Functionally, catalyzes the attachment of glutamate to tRNA(Glu) in a two-step reaction: glutamate is first activated by ATP to form Glu-AMP and then transferred to the acceptor end of tRNA(Glu). This chain is Glutamate--tRNA ligase, found in Aquifex aeolicus (strain VF5).